The following is a 141-amino-acid chain: Large ribosomal subunit protein uL11 (141 aa).

It belongs to the universal ribosomal protein uL11 family. Part of the ribosomal stalk of the 50S ribosomal subunit. Interacts with L10 and the large rRNA to form the base of the stalk. L10 forms an elongated spine to which L12 dimers bind in a sequential fashion forming a multimeric L10(L12)X complex. In terms of processing, one or more lysine residues are methylated.

Its function is as follows. Forms part of the ribosomal stalk which helps the ribosome interact with GTP-bound translation factors. The polypeptide is Large ribosomal subunit protein uL11 (Prochlorococcus marinus (strain MIT 9313)).